The sequence spans 436 residues: Serine hydroxymethyltransferase (436 aa).

(6S)-5,6,7,8-tetrahydrofolate is bound by residues L133 and 137–139 (GHL). K242 is modified (N6-(pyridoxal phosphate)lysine). 366–368 (SPF) provides a ligand contact to (6S)-5,6,7,8-tetrahydrofolate.

The protein belongs to the SHMT family. Homodimer. Pyridoxal 5'-phosphate serves as cofactor.

It localises to the cytoplasm. The catalysed reaction is (6R)-5,10-methylene-5,6,7,8-tetrahydrofolate + glycine + H2O = (6S)-5,6,7,8-tetrahydrofolate + L-serine. It participates in one-carbon metabolism; tetrahydrofolate interconversion. It functions in the pathway amino-acid biosynthesis; glycine biosynthesis; glycine from L-serine: step 1/1. Functionally, catalyzes the reversible interconversion of serine and glycine with tetrahydrofolate (THF) serving as the one-carbon carrier. This reaction serves as the major source of one-carbon groups required for the biosynthesis of purines, thymidylate, methionine, and other important biomolecules. Also exhibits THF-independent aldolase activity toward beta-hydroxyamino acids, producing glycine and aldehydes, via a retro-aldol mechanism. The sequence is that of Serine hydroxymethyltransferase from Novosphingobium aromaticivorans (strain ATCC 700278 / DSM 12444 / CCUG 56034 / CIP 105152 / NBRC 16084 / F199).